The following is a 323-amino-acid chain: Probable cell division protein WhiA (323 aa).

A DNA-binding region (H-T-H motif) is located at residues 275–309; it reads TLKELGEMLTTGQVSKSGINHRLRKLDQIAERLRS.

It belongs to the WhiA family.

In terms of biological role, involved in cell division and chromosome segregation. In Listeria monocytogenes serotype 4a (strain HCC23), this protein is Probable cell division protein WhiA.